The sequence spans 120 residues: NAD(P)H-quinone oxidoreductase subunit 3, chloroplastic (120 aa).

3 helical membrane passes run 9–29 (IFWV…LISG), 64–84 (MFAL…PWAM), and 88–108 (VLGV…IVGL).

This sequence belongs to the complex I subunit 3 family. NDH is composed of at least 16 different subunits, 5 of which are encoded in the nucleus.

It is found in the plastid. The protein resides in the chloroplast thylakoid membrane. It carries out the reaction a plastoquinone + NADH + (n+1) H(+)(in) = a plastoquinol + NAD(+) + n H(+)(out). It catalyses the reaction a plastoquinone + NADPH + (n+1) H(+)(in) = a plastoquinol + NADP(+) + n H(+)(out). In terms of biological role, NDH shuttles electrons from NAD(P)H:plastoquinone, via FMN and iron-sulfur (Fe-S) centers, to quinones in the photosynthetic chain and possibly in a chloroplast respiratory chain. The immediate electron acceptor for the enzyme in this species is believed to be plastoquinone. Couples the redox reaction to proton translocation, and thus conserves the redox energy in a proton gradient. This Cucumis sativus (Cucumber) protein is NAD(P)H-quinone oxidoreductase subunit 3, chloroplastic.